A 390-amino-acid chain; its full sequence is GTPase Obg (390 aa).

The Obg domain occupies 1–159 (MKFVDEATIK…RELRLELLLL (159 aa)). The OBG-type G domain occupies 160–333 (ADVGMLGLPN…LCDELADFMD (174 aa)). Residues 166–173 (GLPNAGKS), 191–195 (FTTLI), 213–216 (DIPG), 283–286 (NKTD), and 314–316 (AAV) each bind GTP. Mg(2+) contacts are provided by Ser173 and Thr193.

Belongs to the TRAFAC class OBG-HflX-like GTPase superfamily. OBG GTPase family. Monomer. The cofactor is Mg(2+).

It is found in the cytoplasm. Its function is as follows. An essential GTPase which binds GTP, GDP and possibly (p)ppGpp with moderate affinity, with high nucleotide exchange rates and a fairly low GTP hydrolysis rate. Plays a role in control of the cell cycle, stress response, ribosome biogenesis and in those bacteria that undergo differentiation, in morphogenesis control. This is GTPase Obg from Aliivibrio fischeri (strain MJ11) (Vibrio fischeri).